The following is a 568-amino-acid chain: MTSFREFAETCQAIEKISSTIETTNKVADLLKKVDVEELPLATHFIMSEVFPAWSGEQLGIGTSLLYSSLSKASGMSVRSIESLIRTTGDIGETALLILKEKRKNQVTFSSFLEEQPELSITEVYQRFKTASEASGKGSQELKIKNLQFLFNSSTPREAKYISRLALEELRIGVGEGVVRDAIARAFSVPSDKVEHAFMVTNDLGIVAAAAKEGGIEALESLGIEINRPIKMMLSQISPDIDADIRDMKGAAIEWKFDGARVQIHKNGNSVTLFSRKLENVTNSLPDLVEIIRKHVKAESAILDGEAVAVDENGKPRAFQEILKRFRRKYDVEEKALGIPIQLNLFDIMYLNGRTLIDLPLVERRKALESCVESSVEDSKSISVDEQVITGDLELVEKIYREALNAGHEGVMVKNPNSAYSPGKRGKNWLKKKPLMETLDLVVVGAEWGYGRRANLIGSYSVACYDPETSRFLQVGKVGTGLTDEQLKELTEMLSGLMEGGEAGGVFAIRPKVVLEIAFEEIQKSPNYDSGFALRFPRFIRIRDDKDPEEADTIQRIGRVYSQQLKRL.

Glu-254 is a binding site for ATP. Lys-256 serves as the catalytic N6-AMP-lysine intermediate. Positions 261, 276, 306, 346, 425, and 431 each coordinate ATP.

It belongs to the ATP-dependent DNA ligase family. It depends on Mg(2+) as a cofactor.

It carries out the reaction ATP + (deoxyribonucleotide)n-3'-hydroxyl + 5'-phospho-(deoxyribonucleotide)m = (deoxyribonucleotide)n+m + AMP + diphosphate.. Its function is as follows. DNA ligase that seals nicks in double-stranded DNA during DNA replication, DNA recombination and DNA repair. The chain is DNA ligase 2 from Methanosarcina acetivorans (strain ATCC 35395 / DSM 2834 / JCM 12185 / C2A).